The following is a 681-amino-acid chain: Potassium-transporting ATPase ATP-binding subunit (681 aa).

Transmembrane regions (helical) follow at residues 30 to 50 (LLVY…FFGI), 59 to 79 (LAIA…EAIA), 216 to 236 (ILLV…LPFT), and 255 to 275 (IALL…SIGI). D306 serves as the catalytic 4-aspartylphosphate intermediate. ATP contacts are provided by residues D343, E347, 376 to 383 (FTATTRMS), and K394. Mg(2+)-binding residues include D517 and D521. The next 3 helical transmembrane spans lie at 587–607 (FAII…LNLM), 615–635 (AILS…PLSL), and 661–681 (LIAP…LGIV).

It belongs to the cation transport ATPase (P-type) (TC 3.A.3) family. Type IA subfamily. In terms of assembly, the system is composed of three essential subunits: KdpA, KdpB and KdpC.

The protein localises to the cell membrane. It carries out the reaction K(+)(out) + ATP + H2O = K(+)(in) + ADP + phosphate + H(+). In terms of biological role, part of the high-affinity ATP-driven potassium transport (or Kdp) system, which catalyzes the hydrolysis of ATP coupled with the electrogenic transport of potassium into the cytoplasm. This subunit is responsible for energy coupling to the transport system and for the release of the potassium ions to the cytoplasm. In Listeria monocytogenes serotype 4a (strain HCC23), this protein is Potassium-transporting ATPase ATP-binding subunit.